Consider the following 105-residue polypeptide: MSALTRLVPFGRVGGRLLRGCRARAAGDSGVRHAGGGVHIQPRYREFPQLTRSQVIQGEFLSSLMWFWILWRFWHDSDAVLGHFSYPDPSQWTDEELGIPPDDED.

The transit peptide at 1–33 (MSALTRLVPFGRVGGRLLRGCRARAAGDSGVRH) directs the protein to the mitochondrion. The disordered stretch occupies residues 86–105 (YPDPSQWTDEELGIPPDDED). Over residues 93–105 (TDEELGIPPDDED) the composition is skewed to acidic residues.

Belongs to the complex I NDUFB2 subunit family. As to quaternary structure, complex I is composed of 45 different subunits.

Its subcellular location is the mitochondrion inner membrane. Accessory subunit of the mitochondrial membrane respiratory chain NADH dehydrogenase (Complex I), that is believed not to be involved in catalysis. Complex I functions in the transfer of electrons from NADH to the respiratory chain. The immediate electron acceptor for the enzyme is believed to be ubiquinone. This is NADH dehydrogenase [ubiquinone] 1 beta subcomplex subunit 2, mitochondrial (Ndufb2) from Mus musculus (Mouse).